Consider the following 78-residue polypeptide: MKRSFLLLLTILTIFIILGQGVMGNDEQLRGNRCFQIKFKTGKCVPKECQTACQEKLRKPKLKGEGFCMKECTCCFYT.

A signal peptide spans 1-24 (MKRSFLLLLTILTIFIILGQGVMG). 4 disulfide bridges follow: cysteine 34–cysteine 75, cysteine 44–cysteine 68, cysteine 49–cysteine 72, and cysteine 53–cysteine 74.

The protein belongs to the DEFL family.

The protein localises to the secreted. In Arabidopsis thaliana (Mouse-ear cress), this protein is Putative defensin-like protein 133 (LCR33).